Reading from the N-terminus, the 614-residue chain is Putative amino acid transporter AAT1 (614 aa).

11 consecutive transmembrane segments (helical) span residues 184–216, 222–243, 255–275, 295–311, 318–340, 360–380, 401–417, 437–459, 531–547, 553–575, and 587–613; these read VLFL…LILL, YITT…YGNL, LIDF…LILV, RIFI…PLTF, INCF…GYQS, HFFK…NACF, ILIQ…LGYL, SILL…NFIA, CAAI…EFNV, FIGI…LIYY, and RYAT…FIII.

Belongs to the amino acid/polyamine transporter 2 family.

The protein localises to the vacuole membrane. Putative amino acid transporter. Involved in maintaining the osmotic homeostasis of the digestive vacuole. Important for the timely development and growth of the asexual-stage parasites and male gametocyte maturation. This chain is Putative amino acid transporter AAT1, found in Plasmodium berghei (strain Anka).